Consider the following 78-residue polypeptide: Delta-conotoxin-like CVIE (78 aa).

Residues 1 to 22 form the signal peptide; it reads MKLTCMMIVAVLFLTAWTFVTA. The propeptide occupies 23-49; sequence DDSRNGLKNLFPKARHEMKNPEASKLN. Disulfide bonds link C54/C69, C61/C73, and C68/C77. P65 carries the 4-hydroxyproline modification.

The protein belongs to the conotoxin O1 superfamily. As to expression, expressed by the venom duct.

The protein localises to the secreted. In terms of biological role, delta-conotoxins bind to site 6 of voltage-gated sodium channels (Nav) and inhibit the inactivation process. The chain is Delta-conotoxin-like CVIE from Conus catus (Cat cone).